The chain runs to 179 residues: Adenine phosphoribosyltransferase (179 aa).

The protein belongs to the purine/pyrimidine phosphoribosyltransferase family. As to quaternary structure, homodimer.

It is found in the cytoplasm. The enzyme catalyses AMP + diphosphate = 5-phospho-alpha-D-ribose 1-diphosphate + adenine. It participates in purine metabolism; AMP biosynthesis via salvage pathway; AMP from adenine: step 1/1. In terms of biological role, catalyzes a salvage reaction resulting in the formation of AMP, that is energically less costly than de novo synthesis. This chain is Adenine phosphoribosyltransferase, found in Nitrobacter winogradskyi (strain ATCC 25391 / DSM 10237 / CIP 104748 / NCIMB 11846 / Nb-255).